The sequence spans 106 residues: Adipokinetic hormone/corazonin-related peptide (106 aa).

The first 25 residues, 1 to 25, serve as a signal peptide directing secretion; that stretch reads MRNSIYKLIMFAVLCMVLTSSLSYA. Residue Q26 is modified to Pyrrolidone carboxylic acid. The residue at position 35 (A35) is an Alanine amide. A propeptide spanning residues 39–106 is cleaved from the precursor; that stretch reads SLAEAAQSTG…GLPLFSNGHL (68 aa).

The protein belongs to the AKH/HRTH/RPCH family. In terms of tissue distribution, only expressed in the head and thorax body segments of adults. Is more expressed in adult males than in females.

It is found in the secreted. In terms of biological role, neuropeptide with neuromodulator or neurotransmitter role that activates the adipokinetic hormone/corazonin-related peptide receptor (ACPR). May function in regulation of post-ecdysis activities. Does not activate the A.gambiae adipokinetic hormone (AKH) and corazonin (CRZ) receptors. The polypeptide is Adipokinetic hormone/corazonin-related peptide (Aedes aegypti (Yellowfever mosquito)).